Reading from the N-terminus, the 43-residue chain is Protein PsbN (43 aa).

The helical transmembrane segment at 5 to 27 (TLVAISISGLLVSFTGYALYTAF) threads the bilayer.

This sequence belongs to the PsbN family.

The protein resides in the plastid. It localises to the chloroplast thylakoid membrane. Its function is as follows. May play a role in photosystem I and II biogenesis. The sequence is that of Protein PsbN from Eucalyptus globulus subsp. globulus (Tasmanian blue gum).